The sequence spans 233 residues: MEQSEAGSAADSIITQFNTYEDFLDSQITALDLHYLEDEELARQLVELGYRGSGEVLKRDEFEARKAAAEASRLSQRTQQKTLSSAGKDPKDNFLKALAMREEANRNGKMTSVIFIRDKNAHGQEVSGYIDFAHRLKTEDFEVYFSGKKKLLPRPTDLSFYNWESHVSTSNPSPNYQVIAETSSGLLFKNKRDRKILNVDPKASPGDNSTRTSIQTDIYIQAVIYDHITRRKS.

The protein resides in the cytoplasm. The protein localises to the nucleus. May be involved in spermatogenesis. In Xenopus laevis (African clawed frog), this protein is Cilia- and flagella-associated protein 299.